A 344-amino-acid polypeptide reads, in one-letter code: UDP-3-O-acylglucosamine N-acyltransferase (344 aa).

Catalysis depends on H248, which acts as the Proton acceptor.

This sequence belongs to the transferase hexapeptide repeat family. LpxD subfamily. In terms of assembly, homotrimer.

It catalyses the reaction a UDP-3-O-[(3R)-3-hydroxyacyl]-alpha-D-glucosamine + a (3R)-hydroxyacyl-[ACP] = a UDP-2-N,3-O-bis[(3R)-3-hydroxyacyl]-alpha-D-glucosamine + holo-[ACP] + H(+). The protein operates within bacterial outer membrane biogenesis; LPS lipid A biosynthesis. Its function is as follows. Catalyzes the N-acylation of UDP-3-O-acylglucosamine using 3-hydroxyacyl-ACP as the acyl donor. Is involved in the biosynthesis of lipid A, a phosphorylated glycolipid that anchors the lipopolysaccharide to the outer membrane of the cell. This is UDP-3-O-acylglucosamine N-acyltransferase from Prochlorococcus marinus subsp. pastoris (strain CCMP1986 / NIES-2087 / MED4).